A 181-amino-acid polypeptide reads, in one-letter code: Large ribosomal subunit protein uL10 (181 aa).

This sequence belongs to the universal ribosomal protein uL10 family. Part of the ribosomal stalk of the 50S ribosomal subunit. The N-terminus interacts with L11 and the large rRNA to form the base of the stalk. The C-terminus forms an elongated spine to which L12 dimers bind in a sequential fashion forming a multimeric L10(L12)X complex.

Functionally, forms part of the ribosomal stalk, playing a central role in the interaction of the ribosome with GTP-bound translation factors. In Nostoc sp. (strain PCC 7120 / SAG 25.82 / UTEX 2576), this protein is Large ribosomal subunit protein uL10.